The chain runs to 287 residues: L-cysteine S-thiosulfotransferase subunit SoxA (287 aa).

The signal sequence occupies residues 1–26; that stretch reads MKTMTGRLVAAALVCGGAFSGAAVSA. Positions 74-168 constitute a Cytochrome c domain; that stretch reads DDFENSGMVF…AMVALIASVS (95 aa). 7 residues coordinate heme c: Cys-102, Cys-105, His-106, Cys-140, Cys-203, Cys-206, and His-207. A substrate-binding site is contributed by Arg-244. A heme c-binding site is contributed by Cys-248. Cys-248 serves as the catalytic Cysteine persulfide intermediate.

It belongs to the SoxA family. As to quaternary structure, heterodimer of SoxA and SoxX. Heme c is required as a cofactor. Cysteine persulfide at Cys-248.

It is found in the periplasm. It catalyses the reaction L-cysteinyl-[SoxY protein] + thiosulfate + 2 Fe(III)-[cytochrome c] = S-sulfosulfanyl-L-cysteinyl-[SoxY protein] + 2 Fe(II)-[cytochrome c] + 2 H(+). The enzyme catalyses S-sulfanyl-L-cysteinyl-[SoxY protein] + thiosulfate + 2 Fe(III)-[cytochrome c] = S-(2-sulfodisulfanyl)-L-cysteinyl-[SoxY protein] + 2 Fe(II)-[cytochrome c] + 2 H(+). In terms of biological role, C-type diheme cytochrome, which is part of the SoxAX cytochrome complex involved in sulfur oxidation. The SoxAX complex catalyzes the formation of a heterodisulfide bond between the conserved cysteine residue on a sulfur carrier SoxYZ complex subunit SoxY and thiosulfate or other inorganic sulfur substrates. This leads to the liberation of two electrons, which may be transferred from the SoxAX complex to another cytochrome c and which then may be used for reductive CO(2) fixation. In Rhodovulum sulfidophilum (Rhodobacter sulfidophilus), this protein is L-cysteine S-thiosulfotransferase subunit SoxA.